The following is a 437-amino-acid chain: Proline--tRNA ligase (437 aa).

The protein belongs to the class-II aminoacyl-tRNA synthetase family. ProS type 2 subfamily. In terms of assembly, homodimer.

Its subcellular location is the cytoplasm. The catalysed reaction is tRNA(Pro) + L-proline + ATP = L-prolyl-tRNA(Pro) + AMP + diphosphate. Catalyzes the attachment of proline to tRNA(Pro) in a two-step reaction: proline is first activated by ATP to form Pro-AMP and then transferred to the acceptor end of tRNA(Pro). This chain is Proline--tRNA ligase, found in Rhizorhabdus wittichii (strain DSM 6014 / CCUG 31198 / JCM 15750 / NBRC 105917 / EY 4224 / RW1) (Sphingomonas wittichii).